Consider the following 663-residue polypeptide: Protein-arginine deiminase type-4 (663 aa).

Ca(2+) contacts are provided by asparagine 153, aspartate 155, aspartate 157, aspartate 165, aspartate 168, glutamate 170, aspartate 176, and aspartate 179. Citrulline is present on residues arginine 205, arginine 212, and arginine 218. Glutamine 349 contacts Ca(2+). Aspartate 350 is an active-site residue. Glutamate 351, glutamate 353, aspartate 369, and serine 370 together coordinate Ca(2+). Arginine 372 carries the post-translational modification Citrulline. Ca(2+) is bound at residue asparagine 373. A citrulline mark is found at arginine 374 and arginine 383. Arginine 374 is a substrate binding site. Ca(2+) contacts are provided by aspartate 388, phenylalanine 407, leucine 410, and glutamate 411. Catalysis depends on residues histidine 471 and aspartate 473. Arginine 639 serves as a coordination point for substrate. The active site involves cysteine 645.

The protein belongs to the protein arginine deiminase family. It depends on Ca(2+) as a cofactor. In terms of processing, autocitrullination at Arg-372 and Arg-374 inactivates the enzyme. Expressed in eosinophils and neutrophils, not expressed in peripheral monocytes or lymphocytes.

The protein resides in the cytoplasm. Its subcellular location is the nucleus. It is found in the cytoplasmic granule. The enzyme catalyses L-arginyl-[protein] + H2O = L-citrullyl-[protein] + NH4(+). Strongly Inhibited by F-amidine and N-alpha-benzoyl-N5-(2-chloro-1-iminoethyl)-L-ornithine amide (Cl-amidine). These inhibitors are however not specific to PADI4 and also inhibit other members of the family. Incorporation of a carboxylate ortho to the backbone amide of Cl-amidine results in inhibitors with increased specificity for PADI4: N-alpha-(2-carboxyl)benzoyl-N(5)-(2-fluoro-1-iminoethyl)-L-ornithine amide (o-F-amidine) and N-alpha-(2-carboxyl)benzoyl-N(5)-(2-chloro-1-iminoethyl)-L-ornithine amide (o-Cl-amidine). Strongly and specifically inhibited by Thr-Asp-F-amidine (TDFA); other members of the family are not inhibited. Catalyzes the citrullination/deimination of arginine residues of proteins such as histones, thereby playing a key role in histone code and regulation of stem cell maintenance. Citrullinates histone H1 at 'Arg-54' (to form H1R54ci), histone H3 at 'Arg-2', 'Arg-8', 'Arg-17' and/or 'Arg-26' (to form H3R2ci, H3R8ci, H3R17ci, H3R26ci, respectively) and histone H4 at 'Arg-3' (to form H4R3ci). Acts as a key regulator of stem cell maintenance by mediating citrullination of histone H1: citrullination of 'Arg-54' of histone H1 (H1R54ci) results in H1 displacement from chromatin and global chromatin decondensation, thereby promoting pluripotency and stem cell maintenance. Promotes profound chromatin decondensation during the innate immune response to infection in neutrophils by mediating formation of H1R54ci. Required for the formation of neutrophil extracellular traps (NETs); NETs are mainly composed of DNA fibers and are released by neutrophils to bind pathogens during inflammation. Citrullination of histone H3 prevents their methylation by CARM1 and HRMT1L2/PRMT1 and represses transcription. Citrullinates EP300/P300 at 'Arg-2142', which favors its interaction with NCOA2/GRIP1. This chain is Protein-arginine deiminase type-4 (PADI4), found in Homo sapiens (Human).